Consider the following 246-residue polypeptide: DNA repair protein RecO (246 aa).

The protein belongs to the RecO family.

In terms of biological role, involved in DNA repair and RecF pathway recombination. In Methylorubrum extorquens (strain PA1) (Methylobacterium extorquens), this protein is DNA repair protein RecO.